The sequence spans 395 residues: ATP synthase subunit beta, chloroplastic (395 aa).

Residue 72–79 participates in ATP binding; that stretch reads GGAGVGKT.

This sequence belongs to the ATPase alpha/beta chains family. As to quaternary structure, F-type ATPases have 2 components, CF(1) - the catalytic core - and CF(0) - the membrane proton channel. CF(1) has five subunits: alpha(3), beta(3), gamma(1), delta(1), epsilon(1). CF(0) has four main subunits: a(1), b(1), b'(1) and c(9-12).

It localises to the plastid. The protein localises to the chloroplast thylakoid membrane. It catalyses the reaction ATP + H2O + 4 H(+)(in) = ADP + phosphate + 5 H(+)(out). Its function is as follows. Produces ATP from ADP in the presence of a proton gradient across the membrane. The catalytic sites are hosted primarily by the beta subunits. The protein is ATP synthase subunit beta, chloroplastic of Blechnum occidentale (Hammock fern).